The following is a 208-amino-acid chain: Pyrrolidone-carboxylate peptidase (208 aa).

Residues Glu-79, Cys-142, and His-166 contribute to the active site.

It belongs to the peptidase C15 family. As to quaternary structure, homotetramer made of two disulfide-linked dimers.

It localises to the cytoplasm. It carries out the reaction Release of an N-terminal pyroglutamyl group from a polypeptide, the second amino acid generally not being Pro.. Removes 5-oxoproline from various penultimate amino acid residues except L-proline. The protein is Pyrrolidone-carboxylate peptidase (pcp) of Pyrococcus furiosus (strain ATCC 43587 / DSM 3638 / JCM 8422 / Vc1).